The following is an 861-amino-acid chain: MTSERSRIPCLSAAAAEGTGKKQQEGRAMATLDRKVPSPEAFLGKPWSSWIDAAKLHCSDNVDLEEAGKEGGKSREVMRLNKEDMHLFGHYPAHDDFYLVVCSACNQVVKPQVFQSHCERRHGSMCRPSPSPVSPASNPRTSLVQVKTKACLSGHHSASSTSKPFKTPKDNLLTSSSKQHTVFPAKGSRDKPCVPVPVVSLEKIPNLVKADGANVKMNSTTTTAVSASSTSSSAVSTPPLIKPVLMSKSVPPSPEKILNGKGILPTTIDKKHQNGTKNSNKPYRRLSEREFDPNKHCGVLDPETKKPCTRSLTCKTHSLSHRRAVPGRKKQFDLLLAEHKAKSREKEVKDKEHLLTSTREILPSQSGPAQDSLLGSSGSSGPEPKVASPAKSRPPNSVLPRPSSANSISSSTSSNHSGHTPEPPLPPVGGDLASRLSSDEGEMDGADESEKLDCQFSTHHPRPLAFCSFGSRLMGRGYYVFDRRWDRFRFALNSMVEKHLNSQMWKKIPPAADSPLPSPAAHITTPVPASVLQPFSNPSAVYLPSAPISSRLTSSYIMTSAMLSNAAFVTSPDPSALMSHTTAFPHVAATLSIMDSTFKAPSAVSPIPAVIPSPSHKPSKTKTSKSSKVKDLSTRSDESPSNKKRKPQSSTSSSSSSSSSSLQTSLSSPLSGPHKKNCVLNASSALNSYQAAPPYNSLSVHNSNNGVSPLSAKLEPSGRTSLPGGPADIVRQVGAVGGSSDSCPLSVPSLALHAGDLSLASHNAVSSLPLSFDKSEGKKRKNSSSSSKACKITKMPGMNSVHKKNPPSLLAPVPDPVNSTSSRQVGKNSSLALSQSSPSSISSPGHSRQNTNRTGRIRTLP.

5 disordered regions span residues 1 to 31, 154 to 189, 342 to 448, 606 to 673, and 772 to 861; these read MTSE…AMAT, GHHS…KGSR, KSRE…GADE, PIPA…LSGP, and FDKS…RTLP. An SCA7 domain is found at 284-351; it reads RRLSEREFDP…KSREKEVKDK (68 aa). Over residues 342-354 the composition is skewed to basic and acidic residues; that stretch reads KSREKEVKDKEHL. Residues 355-369 show a composition bias toward polar residues; the sequence is LTSTREILPSQSGPA. Composition is skewed to low complexity over residues 372–381, 403–417, and 606–616; these read SLLGSSGSSG, SSAN…SNHS, and PIPAVIPSPSH. A compositionally biased stretch (basic residues) spans 617 to 627; sequence KPSKTKTSKSS. Over residues 628–641 the composition is skewed to basic and acidic residues; it reads KVKDLSTRSDESPS. Composition is skewed to low complexity over residues 648-671 and 783-794; these read QSST…SPLS and SSSSSKACKITK. A compositionally biased stretch (polar residues) spans 817–828; sequence VNSTSSRQVGKN. Low complexity predominate over residues 829 to 847; that stretch reads SSLALSQSSPSSISSPGHS.

This Homo sapiens (Human) protein is Ataxin-7-like protein 1 (ATXN7L1).